A 374-amino-acid chain; its full sequence is Aminomethyltransferase (374 aa).

Belongs to the GcvT family. The glycine cleavage system is composed of four proteins: P, T, L and H.

It catalyses the reaction N(6)-[(R)-S(8)-aminomethyldihydrolipoyl]-L-lysyl-[protein] + (6S)-5,6,7,8-tetrahydrofolate = N(6)-[(R)-dihydrolipoyl]-L-lysyl-[protein] + (6R)-5,10-methylene-5,6,7,8-tetrahydrofolate + NH4(+). Functionally, the glycine cleavage system catalyzes the degradation of glycine. This chain is Aminomethyltransferase, found in Prochlorococcus marinus (strain MIT 9313).